Here is a 732-residue protein sequence, read N- to C-terminus: Translation initiation factor eIF2B subunit epsilon (732 aa).

One can recognise a W2 domain in the interval 559–726; the sequence is GEEEEDFGVE…QEADEEDSDE (168 aa).

The protein belongs to the eIF-2B gamma/epsilon subunits family. As to quaternary structure, component of the translation initiation factor 2B (eIF2B) complex which is a heterodecamer of two sets of five different subunits: alpha, beta, gamma, delta and epsilon. Subunits alpha, beta and delta comprise a regulatory subcomplex and subunits epsilon and gamma comprise a catalytic subcomplex. Within the complex, the hexameric regulatory complex resides at the center, with the two heterodimeric catalytic subcomplexes bound on opposite sides.

Its subcellular location is the cytoplasm. The protein resides in the cytosol. Acts as a component of the translation initiation factor 2B (eIF2B) complex, which catalyzes the exchange of GDP for GTP on the eukaryotic initiation factor 2 (eIF2) complex gamma subunit. Its guanine nucleotide exchange factor activity is repressed when bound to eIF2 complex phosphorylated on the alpha subunit, thereby limiting the amount of methionyl-initiator methionine tRNA available to the ribosome and consequently global translation is repressed. The sequence is that of Translation initiation factor eIF2B subunit epsilon (GCD6) from Candida albicans (strain SC5314 / ATCC MYA-2876) (Yeast).